Reading from the N-terminus, the 373-residue chain is Flagellar P-ring protein (373 aa).

Positions 1-26 (MKLFFRIVTLVAVVAMSLADMAPAWA) are cleaved as a signal peptide.

Belongs to the FlgI family. In terms of assembly, the basal body constitutes a major portion of the flagellar organelle and consists of four rings (L,P,S, and M) mounted on a central rod.

It localises to the periplasm. The protein localises to the bacterial flagellum basal body. In terms of biological role, assembles around the rod to form the L-ring and probably protects the motor/basal body from shearing forces during rotation. This is Flagellar P-ring protein from Rhizobium etli (strain ATCC 51251 / DSM 11541 / JCM 21823 / NBRC 15573 / CFN 42).